Here is a 202-residue protein sequence, read N- to C-terminus: Nucleoside triphosphate pyrophosphatase (202 aa).

Aspartate 79 (proton acceptor) is an active-site residue.

It belongs to the Maf family. The cofactor is a divalent metal cation.

The protein localises to the cytoplasm. The catalysed reaction is a ribonucleoside 5'-triphosphate + H2O = a ribonucleoside 5'-phosphate + diphosphate + H(+). It catalyses the reaction a 2'-deoxyribonucleoside 5'-triphosphate + H2O = a 2'-deoxyribonucleoside 5'-phosphate + diphosphate + H(+). Nucleoside triphosphate pyrophosphatase. May have a dual role in cell division arrest and in preventing the incorporation of modified nucleotides into cellular nucleic acids. The sequence is that of Nucleoside triphosphate pyrophosphatase from Rhodopseudomonas palustris (strain HaA2).